The primary structure comprises 282 residues: Trans,polycis-polyprenyl diphosphate synthase ((2Z,6E)-farnesyl diphosphate specific) (282 aa).

Residues 1–30 (MSPKTVFSTDTHREPIPPQPHPSGARPPQL) form a disordered region. Residue D44 is part of the active site. D44 lines the Mg(2+) pocket. Residues 45–48 (GNGR), W49, R57, H61, and 89–91 (STE) each bind substrate. The active-site Proton acceptor is N92. Substrate-binding positions include W93, R95, R212, and 218-220 (RLS). E231 is a Mg(2+) binding site. The tract at residues 262–282 (GGAEPNPVGPPQSAAGAQGQD) is disordered.

The protein belongs to the UPP synthase family. Homodimer. It depends on Mg(2+) as a cofactor.

The enzyme catalyses (2Z,6E)-farnesyl diphosphate + 10 isopentenyl diphosphate = di-trans,deca-cis-tridecaprenyl diphosphate + 10 diphosphate. It catalyses the reaction (2Z,6E)-farnesyl diphosphate + 11 isopentenyl diphosphate = di-trans,undeca-cis-tetradecaprenyl diphosphate + 11 diphosphate. It carries out the reaction (2Z,6E)-farnesyl diphosphate + 9 isopentenyl diphosphate = di-trans,nona-cis-dodecaprenyl diphosphate + 9 diphosphate. In terms of biological role, catalyzes the synthesis of Z,E-mixed prenyl diphosphates by a condensation of isopentenyl diphosphate to an allylic diphosphate. It shows a large substrate specificity accepting dimethylallyl diphosphate (DMAPP), GPP, E,Efarnesyl diphosphate (FPP), E,E,E-geranylgeranyl diphosphate (GGPP), neryl diphosphate (Z-GPP), and (2Z,6E)-farnesyl diphosphate (Z,E-FPP) as allylic substrates. The enzyme exhibits the highest activity when Z,E-FPP is employed as an allylic substrate. The major product is dodecaprenyl diphosphate (C60) under every allylic substrate conditions, but the enzyme is also able to synthesize even C70 prenyl diphosphate as the maximum chain-length product. The polypeptide is Trans,polycis-polyprenyl diphosphate synthase ((2Z,6E)-farnesyl diphosphate specific) (Thermobifida fusca (strain YX)).